Reading from the N-terminus, the 358-residue chain is MKPFPRAEISSKALQNNLARLREIAPGSKVMAVVKANGYGHGLLNVAHCLDNADGFGLARPEEALALREGGVKSKLILLEGFFSQVDLTTLVEHDIDTVVHNEVQLELLESSILAKPATVWLKIDSGMHRLGFTPEQFAAVYARLEACPQVAKPINLMSHFACADEPDNPSTKVQINLFNDLIKDLPGQRSLANSAGTLYWPESQADWIRPGIALYGVSPVIGDLGGNHGLMPAMELVSQLIAVRDHKAGEPVGYGSSWYAKEDTKLGVVAIGYGDGYPRNAPEGTPVWVNGRRVPIVGRVSMDMLTVDLGINATDLIGDDAILWGKALPVEEVAEHIGTIAYELVTKLTPRVAVCLD.

Lys-35 (proton acceptor; specific for D-alanine) is an active-site residue. Position 35 is an N6-(pyridoxal phosphate)lysine (Lys-35). Residue Arg-130 participates in substrate binding. Tyr-255 acts as the Proton acceptor; specific for L-alanine in catalysis. Residue Met-303 coordinates substrate.

This sequence belongs to the alanine racemase family. Pyridoxal 5'-phosphate is required as a cofactor.

The enzyme catalyses L-alanine = D-alanine. Its pathway is amino-acid biosynthesis; D-alanine biosynthesis; D-alanine from L-alanine: step 1/1. Its function is as follows. Catalyzes the interconversion of L-alanine and D-alanine. May also act on other amino acids. In Shewanella sediminis (strain HAW-EB3), this protein is Alanine racemase (alr).